Consider the following 124-residue polypeptide: NADH dehydrogenase [ubiquinone] 1 alpha subcomplex subunit 6 (124 aa).

This sequence belongs to the complex I LYR family.

It localises to the mitochondrion inner membrane. Its function is as follows. Accessory subunit of the mitochondrial membrane respiratory chain NADH dehydrogenase (Complex I), that is believed to be not involved in catalysis. Complex I functions in the transfer of electrons from NADH to the respiratory chain. The immediate electron acceptor for the enzyme is believed to be ubiquinone. This is NADH dehydrogenase [ubiquinone] 1 alpha subcomplex subunit 6 (ndufa6) from Dictyostelium discoideum (Social amoeba).